Consider the following 657-residue polypeptide: PAN2-PAN3 deadenylation complex subunit PAN3 (657 aa).

Disordered regions lie at residues Met1–Asp29, His52–Ile98, and Ser115–Ile135. A C3H1-type zinc finger spans residues Ala27–Ser55. Positions His52–Ser67 are enriched in basic and acidic residues. 2 stretches are compositionally biased toward polar residues: residues Asp75–Ile98 and Ser115–Glu132. The segment at Gln259–Ser521 is pseudokinase domain. ATP contacts are provided by residues Arg311, Asp360 to Thr367, and Ser421 to Lys422. Residues Ser522–Phe560 adopt a coiled-coil conformation. The segment at Ile561–Ile657 is knob domain.

The protein belongs to the protein kinase superfamily. PAN3 family. As to quaternary structure, homodimer. Forms a heterotrimer with a catalytic subunit PAN2 to form the poly(A)-nuclease (PAN) deadenylation complex. Interacts (via PAM-2 motif) with poly(A)-binding protein PAB1 (via PABC domain), conferring substrate specificity of the enzyme complex.

The protein resides in the cytoplasm. In terms of biological role, regulatory subunit of the poly(A)-nuclease (PAN) deadenylation complex, one of two cytoplasmic mRNA deadenylases involved in mRNA turnover. PAN specifically shortens poly(A) tails of RNA and the activity is stimulated by poly(A)-binding protein PAB1. PAN deadenylation is followed by rapid degradation of the shortened mRNA tails by the CCR4-NOT complex. Deadenylated mRNAs are then degraded by two alternative mechanisms, namely exosome-mediated 3'-5' exonucleolytic degradation, or deadenylation-dependent mRNA decaping and subsequent 5'-3' exonucleolytic degradation by XRN1. May also be involved in post-transcriptional maturation of mRNA poly(A) tails. PAN3 acts as a positive regulator for PAN activity, recruiting the catalytic subunit PAN2 to mRNA via its interaction with RNA and with PAB1. This Coccidioides immitis (strain RS) (Valley fever fungus) protein is PAN2-PAN3 deadenylation complex subunit PAN3.